Here is a 217-residue protein sequence, read N- to C-terminus: Probable GTP-binding protein EngB (217 aa).

Positions 27–201 constitute an EngB-type G domain; it reads TGIEVAFAGR…RDKLDTWFSE (175 aa). Residues 35 to 42, 62 to 66, 80 to 83, 147 to 150, and 180 to 182 contribute to the GTP site; these read GRSNAGKS, GRTQL, DLPG, TKAD, and FSS. Positions 42 and 64 each coordinate Mg(2+).

Belongs to the TRAFAC class TrmE-Era-EngA-EngB-Septin-like GTPase superfamily. EngB GTPase family. Requires Mg(2+) as cofactor.

Functionally, necessary for normal cell division and for the maintenance of normal septation. In Edwardsiella ictaluri (strain 93-146), this protein is Probable GTP-binding protein EngB.